We begin with the raw amino-acid sequence, 299 residues long: MNYLLFCLFFAFSVAAPVTVTRFVDASPTGYDWRADWVKGFPIDSSCNATQYNQLSTGLQEAQLLAEHARDHTLRFGSKSPFFRKYFGNETASAEVVGHFDNVVGADKSSILFLCDDLDDKCKNDGWAGYWRGSNHSDQTIICDLSFVTRRYLTQLCSSGYTVSKSKTNIFWAGDLLHRFWHLKSIGQLVIEHYADTYEEVLELAQENSTYAVRNSNSLIYYALDVYAYDVTIPGEGCNGDGTSYKKSDFSSFEDSDSGSDSGASSTASSSHQHTDSNPSATTDANSHCHTHADGEVHC.

The N-terminal stretch at 1-15 is a signal peptide; it reads MNYLLFCLFFAFSVA. N-linked (GlcNAc...) asparagine glycosylation is found at N48, N89, N135, and N208. A disordered region spans residues 253 to 299; that stretch reads FEDSDSGSDSGASSTASSSHQHTDSNPSATTDANSHCHTHADGEVHC. Residues 259 to 272 show a composition bias toward low complexity; that stretch reads GSDSGASSTASSSH. Over residues 278-288 the composition is skewed to polar residues; it reads NPSATTDANSH.

The protein belongs to the ZPS1 family. Component of a multiprotein complex of 250 kDa composed of at least HYR1, MP65, and PRA1. Interacts with host Integrin alpha-M/beta-2 heterodimer. Also binds human factor H (CFH), CFHR1, plasminogen (PLG), complement C3, and C4BPA. Interacts with ZRT101. Post-translationally, N- and O-glycosylated. The N- and 0-glycosidically linked carbohydrates represent 18 to 20 percent and 3 to 4 percent, respectively, of the molecular mass of PRA1. 0-linked sugar residues may be involved in the interaction with fibrinogen. Contributes highly to the carbohydrate component of the matrix. Treatment with tunicamycin impairs glycosylation.

The protein localises to the secreted. In terms of biological role, cell surface protein involved in the host-parasite interaction during candidal infection. With MP65, represents a major component of the biofilm matrix. As a surface protein, binds the two human complement regulators CFH and CFHR1, as well as plasminogen PLG, mediates complement evasion and extra-cellular matrix interaction and/or degradation. As a released protein, enhances complement control in direct vicinity of the yeast and thus generates an additional protective layer which controls host complement attack, assisting the fungus in escaping host surveillance. Binds to host fluid-phase C3 and blocks cleavage of C3 to C3a and C3b, leading to inhibition of complement activation and protection from uptake of C.albicans by human macrophages. Also mediates human complement control and complement evasion through binding to C4BPA, another human complement inhibitor, as well as through binding to host integrin alpha-M/beta-2. Binds zinc from its environment and then reassociates with ZRT1 to acquire this essential metal. The sequence is that of pH-regulated antigen PRA1 from Candida albicans (strain SC5314 / ATCC MYA-2876) (Yeast).